Consider the following 262-residue polypeptide: MTTKVRFTVAYDGTGFCGWQKQKPEDQISVAQVIEEALSKVFNEKITLFASGRTDAGVHALNQVCHFSTHRKIDPNKKWDLCWALNSHLPPSIVAKKAWIAPDDFHATLSATHKTYRYLIVNKPRPSAHLNRYADWVRLPIDIEHLQESSKYLLGNQDFKSFQSVGTPVPDTVREIYKADWEWRKPGVMQFTITGSGFLKQMVRNIVGTSLFLERKGLDPSKMQEIIAAQDRMKAGPPAPAQGLYLMKVYYPQDLDNRCLEL.

The Nucleophile role is filled by Asp55. Tyr116 lines the substrate pocket.

The protein belongs to the tRNA pseudouridine synthase TruA family. As to quaternary structure, homodimer.

It carries out the reaction uridine(38/39/40) in tRNA = pseudouridine(38/39/40) in tRNA. Its function is as follows. Formation of pseudouridine at positions 38, 39 and 40 in the anticodon stem and loop of transfer RNAs. The protein is tRNA pseudouridine synthase A of Bdellovibrio bacteriovorus (strain ATCC 15356 / DSM 50701 / NCIMB 9529 / HD100).